The primary structure comprises 108 residues: Peptidyl-prolyl cis-trans isomerase FKBP1B (108 aa).

The PPIase FKBP-type domain maps to 20–108 (GQICVVHYTG…IFDVELLSLE (89 aa)).

This sequence belongs to the FKBP-type PPIase family. FKBP1 subfamily. Identified in a complex composed of RYR2, FKBP1B, PKA catalytic subunit, PRKAR2A, AKAP6, and the protein phosphatases PP2A and PP1. Interacts directly with RYR2.

It is found in the cytoplasm. It localises to the sarcoplasmic reticulum. The catalysed reaction is [protein]-peptidylproline (omega=180) = [protein]-peptidylproline (omega=0). Inhibited by both FK506 and rapamycin. Its function is as follows. Has the potential to contribute to the immunosuppressive and toxic effects of FK506 and rapamycin. PPIases accelerate the folding of proteins. It catalyzes the cis-trans isomerization of proline imidic peptide bonds in oligopeptides. The sequence is that of Peptidyl-prolyl cis-trans isomerase FKBP1B (Fkbp1b) from Mus musculus (Mouse).